A 210-amino-acid chain; its full sequence is dTTP/UTP pyrophosphatase (210 aa).

Asp89 acts as the Proton acceptor in catalysis.

Belongs to the Maf family. YhdE subfamily. The cofactor is a divalent metal cation.

Its subcellular location is the cytoplasm. The catalysed reaction is dTTP + H2O = dTMP + diphosphate + H(+). It catalyses the reaction UTP + H2O = UMP + diphosphate + H(+). Its function is as follows. Nucleoside triphosphate pyrophosphatase that hydrolyzes dTTP and UTP. May have a dual role in cell division arrest and in preventing the incorporation of modified nucleotides into cellular nucleic acids. The sequence is that of dTTP/UTP pyrophosphatase from Burkholderia thailandensis (strain ATCC 700388 / DSM 13276 / CCUG 48851 / CIP 106301 / E264).